The primary structure comprises 178 residues: Interleukin-10 (178 aa).

Positions 1-18 (MHSSALLCCLVLLTGVRA) are cleaved as a signal peptide. 2 disulfide bridges follow: C30–C126 and C80–C132. An N-linked (GlcNAc...) asparagine glycan is attached at N134.

Belongs to the IL-10 family. As to quaternary structure, homodimer. Interacts with IL10RA and IL10RB.

Its subcellular location is the secreted. Major immune regulatory cytokine that acts on many cells of the immune system where it has profound anti-inflammatory functions, limiting excessive tissue disruption caused by inflammation. Mechanistically, IL10 binds to its heterotetrameric receptor comprising IL10RA and IL10RB leading to JAK1 and STAT2-mediated phosphorylation of STAT3. In turn, STAT3 translocates to the nucleus where it drives expression of anti-inflammatory mediators. Targets antigen-presenting cells (APCs) such as macrophages and monocytes and inhibits their release of pro-inflammatory cytokines including granulocyte-macrophage colony-stimulating factor /GM-CSF, granulocyte colony-stimulating factor/G-CSF, IL-1 alpha, IL-1 beta, IL-6, IL-8 and TNF-alpha. Also interferes with antigen presentation by reducing the expression of MHC-class II and co-stimulatory molecules, thereby inhibiting their ability to induce T cell activation. In addition, controls the inflammatory response of macrophages by reprogramming essential metabolic pathways including mTOR signaling. The polypeptide is Interleukin-10 (IL10) (Macaca mulatta (Rhesus macaque)).